The primary structure comprises 368 residues: tRNA-specific 2-thiouridylase MnmA (368 aa).

ATP is bound by residues 10-17 (AMSGGVDS) and Met-36. Catalysis depends on Cys-108, which acts as the Nucleophile. Residues Cys-108 and Cys-206 are joined by a disulfide bond. Gly-132 contributes to the ATP binding site. The tract at residues 156–158 (KDQ) is interaction with tRNA. Cys-206 functions as the Cysteine persulfide intermediate in the catalytic mechanism. The tract at residues 312-313 (RY) is interaction with tRNA.

This sequence belongs to the MnmA/TRMU family.

The protein localises to the cytoplasm. The catalysed reaction is S-sulfanyl-L-cysteinyl-[protein] + uridine(34) in tRNA + AH2 + ATP = 2-thiouridine(34) in tRNA + L-cysteinyl-[protein] + A + AMP + diphosphate + H(+). Functionally, catalyzes the 2-thiolation of uridine at the wobble position (U34) of tRNA, leading to the formation of s(2)U34. The chain is tRNA-specific 2-thiouridylase MnmA from Natranaerobius thermophilus (strain ATCC BAA-1301 / DSM 18059 / JW/NM-WN-LF).